We begin with the raw amino-acid sequence, 314 residues long: MELILSTSPAKLTLDPARQPELTLRFNLSKLTLDPARQPELSLSPRLAELTLDPTCHPEMSLSPGPAELTLDPQHQAKELPVPKLPELILEPVHCRPELMSACADLINDQWPRSRASRLHSLGQSSDAFPLCLMLLSPQPTPGAAPVVVGHARLSRVLDQPHSLLVETVVVARPLRGRGFGRRLMEGLEAFARARGFRRLHLTTHDQLYFYAHLGYQLGEPVQGLAFTNRRLSTTVLRAFSKPPCPQPPCKEPILAAQAVPRSSKGPPLPPPPPLPQSLTASPPPSPEPLPQSPLETCYRDLKGCPIFWMEKDI.

In terms of domain architecture, N-acetyltransferase spans 90 to 243 (LEPVHCRPEL…TTVLRAFSKP (154 aa)). Substrate-binding positions include Arg113 and 118 to 121 (RLHS). Acetyl-CoA contacts are provided by residues 169–171 (VVV), 177–182 (GRGFGR), and Gln207. Residues 260–295 (VPRSSKGPPLPPPPPLPQSLTASPPPSPEPLPQSPL) are disordered. Over residues 267–292 (PPLPPPPPLPQSLTASPPPSPEPLPQ) the composition is skewed to pro residues.

This sequence belongs to the acetyltransferase family.

It is found in the cytoplasm. It localises to the cytosol. The enzyme catalyses N-terminal L-aspartyl-L-aspartyl-L-aspartyl-[protein] + acetyl-CoA = N-terminal N-acetyl-L-aspartyl-L-aspartyl-L-aspartyl-[protein] + CoA + H(+). It catalyses the reaction N-terminal L-glutamyl-L-glutamyl-L-glutamyl-[protein] + acetyl-CoA = N-terminal N-acetyl-L-glutamyl-L-glutamyl-L-glutamyl-[protein] + CoA + H(+). Its function is as follows. N-alpha-acetyltransferase that specifically mediates the acetylation of the acidic amino terminus of processed forms of beta- and gamma-actin (ACTB and ACTG, respectively). N-terminal acetylation of processed beta- and gamma-actin regulates actin filament depolymerization and elongation. In vivo, preferentially displays N-terminal acetyltransferase activity towards acid N-terminal sequences starting with Asp-Asp-Asp and Glu-Glu-Glu. In vitro, shows high activity towards Met-Asp-Glu-Leu and Met-Asp-Asp-Asp. May act as a tumor suppressor. This Mus musculus (Mouse) protein is N-alpha-acetyltransferase 80.